Reading from the N-terminus, the 438-residue chain is Serine hydroxymethyltransferase 1 (438 aa).

Residues leucine 130 and 134–136 contribute to the (6S)-5,6,7,8-tetrahydrofolate site; that span reads GHL. Lysine 239 is modified (N6-(pyridoxal phosphate)lysine).

This sequence belongs to the SHMT family. As to quaternary structure, homodimer. The cofactor is pyridoxal 5'-phosphate.

Its subcellular location is the cytoplasm. It carries out the reaction (6R)-5,10-methylene-5,6,7,8-tetrahydrofolate + glycine + H2O = (6S)-5,6,7,8-tetrahydrofolate + L-serine. It functions in the pathway one-carbon metabolism; tetrahydrofolate interconversion. It participates in amino-acid biosynthesis; glycine biosynthesis; glycine from L-serine: step 1/1. Catalyzes the reversible interconversion of serine and glycine with tetrahydrofolate (THF) serving as the one-carbon carrier. This reaction serves as the major source of one-carbon groups required for the biosynthesis of purines, thymidylate, methionine, and other important biomolecules. Also exhibits THF-independent aldolase activity toward beta-hydroxyamino acids, producing glycine and aldehydes, via a retro-aldol mechanism. Thus, is able to catalyze the cleavage of L-allo-threonine. The chain is Serine hydroxymethyltransferase 1 from Mycobacterium tuberculosis (strain ATCC 25618 / H37Rv).